Reading from the N-terminus, the 609-residue chain is Myoneurin (609 aa).

Residues 24–89 (CDCTILIGDF…IYSGNLNYDS (66 aa)) form the BTB domain. Short sequence motifs (nuclear localization signal) lie at residues 172-188 (KKSQKIKRWKRPLRSHQ) and 257-262 (QKPAKL). 8 consecutive C2H2-type zinc fingers follow at residues 301-323 (PVCNTCGKVFSEASSLRRHMRIH), 329-351 (YVCHLCAKAFTQCNQLKTHVRTH), 357-380 (YQCKKCDKGFAQKCQLVFHSRMHH), 386-408 (YKCDVCNLQFATSSNLKIHARKH), 414-436 (YVCDRCGQRFAQASTLTYHVRRH), 442-464 (YVCDTCGKAFAVSSSLITHARKH), 470-492 (YICGVCRKSFISSGELNKHFRSH), and 498-521 (FVCEVCGNSYTDVKNLKKHKLKMH). Positions 528–553 (IEMKSAENSSSSEDSTTKSPEPESLE) are disordered. Low complexity predominate over residues 533–546 (AENSSSSEDSTTKS).

It is found in the nucleus. This chain is Myoneurin (mynn), found in Xenopus laevis (African clawed frog).